Here is a 121-residue protein sequence, read N- to C-terminus: Large ribosomal subunit protein uL24 (121 aa).

Belongs to the universal ribosomal protein uL24 family. As to quaternary structure, part of the 50S ribosomal subunit.

Its function is as follows. One of two assembly initiator proteins, it binds directly to the 5'-end of the 23S rRNA, where it nucleates assembly of the 50S subunit. Functionally, located at the polypeptide exit tunnel on the outside of the subunit. The polypeptide is Large ribosomal subunit protein uL24 (Pyrococcus horikoshii (strain ATCC 700860 / DSM 12428 / JCM 9974 / NBRC 100139 / OT-3)).